The primary structure comprises 76 residues: Exodeoxyribonuclease 7 small subunit (76 aa).

The protein belongs to the XseB family. In terms of assembly, heterooligomer composed of large and small subunits.

It is found in the cytoplasm. It carries out the reaction Exonucleolytic cleavage in either 5'- to 3'- or 3'- to 5'-direction to yield nucleoside 5'-phosphates.. Bidirectionally degrades single-stranded DNA into large acid-insoluble oligonucleotides, which are then degraded further into small acid-soluble oligonucleotides. In Lactiplantibacillus plantarum (strain ATCC BAA-793 / NCIMB 8826 / WCFS1) (Lactobacillus plantarum), this protein is Exodeoxyribonuclease 7 small subunit.